A 388-amino-acid polypeptide reads, in one-letter code: Succinate--CoA ligase [ADP-forming] subunit beta (388 aa).

The ATP-grasp domain maps to 9–244; the sequence is KEILRKFGVA…PDEEDPKETQ (236 aa). Residues lysine 46, 53–55, glutamate 99, cysteine 102, and glutamate 107 contribute to the ATP site; that span reads GRG. Mg(2+) is bound by residues asparagine 199 and aspartate 213. Substrate-binding positions include asparagine 264 and 321–323; that span reads GIM.

It belongs to the succinate/malate CoA ligase beta subunit family. Heterotetramer of two alpha and two beta subunits. Mg(2+) serves as cofactor.

The enzyme catalyses succinate + ATP + CoA = succinyl-CoA + ADP + phosphate. The catalysed reaction is GTP + succinate + CoA = succinyl-CoA + GDP + phosphate. Its pathway is carbohydrate metabolism; tricarboxylic acid cycle; succinate from succinyl-CoA (ligase route): step 1/1. In terms of biological role, succinyl-CoA synthetase functions in the citric acid cycle (TCA), coupling the hydrolysis of succinyl-CoA to the synthesis of either ATP or GTP and thus represents the only step of substrate-level phosphorylation in the TCA. The beta subunit provides nucleotide specificity of the enzyme and binds the substrate succinate, while the binding sites for coenzyme A and phosphate are found in the alpha subunit. The chain is Succinate--CoA ligase [ADP-forming] subunit beta from Anaeromyxobacter dehalogenans (strain 2CP-1 / ATCC BAA-258).